The sequence spans 802 residues: Pyrophosphate-energized membrane proton pump 2 (802 aa).

A run of 6 helical transmembrane segments spans residues 45–65, 66–86, 118–138, 160–180, 206–226, and 246–266; these read VLSI…ASTS, PIIV…IYLT, YSTI…IYLF, VAAF…GMWV, AGGF…AILY, and LPLL…FAQL. Lysine 273 provides a ligand contact to substrate. Positions 276, 280, and 306 each coordinate Mg(2+). 5 consecutive transmembrane segments (helical) span residues 348–368, 386–406, 421–441, 468–488, and 511–531; these read FILF…IGIL, MAVL…TFGA, WFNF…FVWI, IIAG…TISV, and GGLF…AYVL. Mg(2+) contacts are provided by aspartate 541 and asparagine 568. The next 4 membrane-spanning stretches (helical) occupy residues 577-597, 615-635, 686-706, and 716-736; these read FAIG…MDEV, VFVG…WACA, GALA…LGYY, and VVAS…LFLN. The Mg(2+) site is built by aspartate 743 and aspartate 773. Lysine 776 contributes to the substrate binding site. A helical transmembrane segment spans residues 782–802; sequence SIHVLIKMLATITLVMAPVFL.

This sequence belongs to the H(+)-translocating pyrophosphatase (TC 3.A.10) family. K(+)-insensitive subfamily. As to quaternary structure, monomer. As to expression, ubiquitous. Mostly expressed in cotyledons, roots and flowers. Especially high levels in trichomes, sepals and stamen filaments.

Its subcellular location is the golgi apparatus membrane. The catalysed reaction is diphosphate + H2O + H(+)(in) = 2 phosphate + 2 H(+)(out). Activated by Mg(+) but not by K(+). Inhibited by Ca(2+). In terms of biological role, pyrophosphatase active in both inorganic pyrophosphate hydrolysis and H(+) translocation. In Arabidopsis thaliana (Mouse-ear cress), this protein is Pyrophosphate-energized membrane proton pump 2 (AVPL1).